Reading from the N-terminus, the 89-residue chain is Small ribosomal subunit protein uS14A (89 aa).

The protein belongs to the universal ribosomal protein uS14 family. As to quaternary structure, part of the 30S ribosomal subunit. Contacts proteins S3 and S10.

Binds 16S rRNA, required for the assembly of 30S particles and may also be responsible for determining the conformation of the 16S rRNA at the A site. This is Small ribosomal subunit protein uS14A from Streptococcus equi subsp. zooepidemicus (strain MGCS10565).